The following is a 296-amino-acid chain: tRNA dimethylallyltransferase (296 aa).

An ATP-binding site is contributed by 2 to 9; the sequence is GPTASGKT. Residue 4-9 participates in substrate binding; that stretch reads TASGKT. 3 interaction with substrate tRNA regions span residues 27–30, 151–155, and 232–237; these read DSAL, QRLAR, and RCVGYR.

Belongs to the IPP transferase family. As to quaternary structure, monomer. Mg(2+) is required as a cofactor.

The catalysed reaction is adenosine(37) in tRNA + dimethylallyl diphosphate = N(6)-dimethylallyladenosine(37) in tRNA + diphosphate. Catalyzes the transfer of a dimethylallyl group onto the adenine at position 37 in tRNAs that read codons beginning with uridine, leading to the formation of N6-(dimethylallyl)adenosine (i(6)A). The sequence is that of tRNA dimethylallyltransferase from Shewanella pealeana (strain ATCC 700345 / ANG-SQ1).